The chain runs to 463 residues: Argininosuccinate lyase (463 aa).

Belongs to the lyase 1 family. Argininosuccinate lyase subfamily.

It is found in the cytoplasm. It carries out the reaction 2-(N(omega)-L-arginino)succinate = fumarate + L-arginine. The protein operates within amino-acid biosynthesis; L-arginine biosynthesis; L-arginine from L-ornithine and carbamoyl phosphate: step 3/3. The chain is Argininosuccinate lyase from Chlorobaculum parvum (strain DSM 263 / NCIMB 8327) (Chlorobium vibrioforme subsp. thiosulfatophilum).